A 35-amino-acid chain; its full sequence is Photosystem II reaction center protein T (35 aa).

The chain crosses the membrane as a helical span at residues 3–23 (ALVYTFLLVSTLGIIFFAIFF).

Belongs to the PsbT family. PSII is composed of 1 copy each of membrane proteins PsbA, PsbB, PsbC, PsbD, PsbE, PsbF, PsbH, PsbI, PsbJ, PsbK, PsbL, PsbM, PsbT, PsbY, PsbZ, Psb30/Ycf12, at least 3 peripheral proteins of the oxygen-evolving complex and a large number of cofactors. It forms dimeric complexes.

The protein localises to the plastid. It is found in the chloroplast thylakoid membrane. Its function is as follows. Found at the monomer-monomer interface of the photosystem II (PS II) dimer, plays a role in assembly and dimerization of PSII. PSII is a light-driven water plastoquinone oxidoreductase, using light energy to abstract electrons from H(2)O, generating a proton gradient subsequently used for ATP formation. This is Photosystem II reaction center protein T from Asarum canadense (Wild ginger).